The sequence spans 418 residues: E3 ubiquitin-protein ligase makorin-2 (418 aa).

2 C3H1-type zinc fingers span residues 2-29 and 31-58; these read NTKH…HDLA and SKPS…HVKP. Residues 76–100 form a disordered region; that stretch reads ESTPPLLPTQEAAAPVTKSAPQRRE. The C3H1-type 3 zinc-finger motif lies at 164 to 191; that stretch reads DAPQQLCPFAQAGGCHYGESCPYIHGNV. The tract at residues 192 to 221 is makorin-type Cys-His; the sequence is CEICGLQVLHPYDQEQRGHHEKLCMANFER. The RING-type zinc finger occupies 237–291; the sequence is CSICMERVYDKQSPSERRFGILSNCHHTYCLACIRQWRCARQFENPVIKSCPECR. Residues 320 to 349 form a C3H1-type 4 zinc finger; that stretch reads GMGKKACKYFDQGRGTCPFGGKCLYLHAYP.

Its subcellular location is the cytoplasm. It is found in the nucleus. It carries out the reaction S-ubiquitinyl-[E2 ubiquitin-conjugating enzyme]-L-cysteine + [acceptor protein]-L-lysine = [E2 ubiquitin-conjugating enzyme]-L-cysteine + N(6)-ubiquitinyl-[acceptor protein]-L-lysine.. It participates in protein modification; protein ubiquitination. Functionally, E3 ubiquitin ligase catalyzing the covalent attachment of ubiquitin moieties onto substrate proteins. Inhibits neurogenesis and axis formation during embryonic development by modulating the phosphatidylinositol 3-kinase (PI3K) pathway. Acts downstream of PI3K and akt1 to up-regulate gsk3b mRNA expression. This Xenopus tropicalis (Western clawed frog) protein is E3 ubiquitin-protein ligase makorin-2 (mkrn2).